Reading from the N-terminus, the 212-residue chain is Fe/S biogenesis protein NfuA (212 aa).

[4Fe-4S] cluster contacts are provided by Cys169 and Cys172.

It belongs to the NfuA family. In terms of assembly, homodimer. [4Fe-4S] cluster serves as cofactor.

Its function is as follows. Involved in iron-sulfur cluster biogenesis. Binds a 4Fe-4S cluster, can transfer this cluster to apoproteins, and thereby intervenes in the maturation of Fe/S proteins. Could also act as a scaffold/chaperone for damaged Fe/S proteins. This Acinetobacter baumannii (strain SDF) protein is Fe/S biogenesis protein NfuA.